We begin with the raw amino-acid sequence, 470 residues long: FAD-dependent monooxygenase nvfK (470 aa).

A signal peptide spans 1–23; the sequence is MEKAKFKVVIVGGSITGLTLAHC. FAD contacts are provided by glutamate 35, glycine 49, and arginine 108. Asparagine 121 carries N-linked (GlcNAc...) asparagine glycosylation. Tyrosine 216 is a catalytic residue. The FAD site is built by aspartate 308 and alanine 321. The chain crosses the membrane as a helical span at residues 450–470; that stretch reads ILMSIVLVAPAWVYIFSSLVW.

This sequence belongs to the paxM FAD-dependent monooxygenase family. FAD serves as cofactor.

It localises to the membrane. It catalyses the reaction (3R)-3-farnesyl-6-hydroxy-2,3,5-trimethyl-4-oxocyclohexa-1,5-diene-1-carboxylate + 2-oxoglutarate + O2 = (3R)-[(10S)-11-epoxyfarnesyl]-2,3,5-trimethyl-6-oxido-4-oxocyclohexa-1,5-diene-1-carboxylate + succinate + CO2. It participates in secondary metabolite biosynthesis; terpenoid biosynthesis. Its function is as follows. FAD-dependent monooxygenase; part of the gene cluster that mediates the biosynthesis of novofumigatonin, a heavily oxygenated meroterpenoid containing a unique orthoester moiety. The first step of the pathway is the synthesis of 3,5-dimethylorsellinic acid (DMOA) by the polyketide synthase nvfA via condensation of one acetyl-CoA starter unit with 3 malonyl-CoA units and 2 methylations. DMOA is then converted to farnesyl-DMOA by the farnesyltransferase nvfB. Epoxydation by FAD-dependent monooxygenase nvfK, followed by a protonation-initiated cyclization catalyzed by the terpene cyclase nvfL leads to the production of asnavolin H. The short chain dehydrogenase nvfC then as a 3-OH dehydrogenase of asnovolin H to yield chemesin D. There are two branches to synthesize asnovolin A from chemesin D. In one branch, chemesin D undergoes Baeyer-Villiger oxidation by nvfH, methylation by nvfJ, and enoyl reduction by the nvfM D enoylreductase that reduces the double bond between C-5'and C-6', to form respectively asnovolin I, asnovolin K, and asnovolin A. In the other branch, the methylation precedes the Baeyer-Villiger oxidation and the enoyl reduction to yield asnovolin A via the asnovolin J intermediate. Asnovolin A is further converted to fumigatonoid A by the Fe(II)/2-oxoglutarate-dependent dioxygenase nvfI that catalyzes an endoperoxidation reaction. The alpha/beta hydrolase nvfD then acts as an epimerase that converts fumigatonoid A to its C-5' epimer, which then undergoes spontaneous or nvfD-catalyzed lactonization. The following step utilizes the ketoreductase nvfG to produce fumigatonoid B. The dioxygenase nvfE further converts fumigatonoid B into fumigatonoid C. Finally the Fe(II)/2-oxoglutarate-dependent dioxygenase nvfF catalyzes two rounds of oxidation to transform fumigatonoid C into the end product, novofumigatonin A. The chain is FAD-dependent monooxygenase nvfK from Aspergillus novofumigatus (strain IBT 16806).